The following is a 288-amino-acid chain: RanBP2-type zinc finger protein At1g67325 (288 aa).

Polar residues predominate over residues 1-11 (MSQVDNRNSSA). 5 disordered regions span residues 1 to 24 (MSQV…RRED), 52 to 77 (PADH…GAYL), 176 to 198 (MPRP…DNDW), 222 to 248 (PKPG…WKCD), and 265 to 288 (NCGA…ENDQ). Residues 15 to 24 (ARTDGGRRED) are compositionally biased toward basic and acidic residues. RanBP2-type zinc fingers lie at residues 22–53 (REDD…PRPA), 194–225 (RDND…PKPG), and 241–272 (PEGS…DKPG). Basic and acidic residues predominate over residues 181-197 (FYPDEKSQKRDSTRDND). Residues 223 to 241 (KPGSQQGGSSDKISKQNAP) are compositionally biased toward polar residues. Serine 278 is subject to Phosphoserine.

The polypeptide is RanBP2-type zinc finger protein At1g67325 (Arabidopsis thaliana (Mouse-ear cress)).